The chain runs to 181 residues: Large ribosomal subunit protein uL5 (181 aa).

Belongs to the universal ribosomal protein uL5 family. Part of the 50S ribosomal subunit; part of the 5S rRNA/L5/L18/L25 subcomplex. Contacts the 5S rRNA and the P site tRNA. Forms a bridge to the 30S subunit in the 70S ribosome.

In terms of biological role, this is one of the proteins that bind and probably mediate the attachment of the 5S RNA into the large ribosomal subunit, where it forms part of the central protuberance. In the 70S ribosome it contacts protein S13 of the 30S subunit (bridge B1b), connecting the 2 subunits; this bridge is implicated in subunit movement. Contacts the P site tRNA; the 5S rRNA and some of its associated proteins might help stabilize positioning of ribosome-bound tRNAs. This is Large ribosomal subunit protein uL5 from Helicobacter pylori (strain ATCC 700392 / 26695) (Campylobacter pylori).